The chain runs to 191 residues: Calcium-activated potassium channel subunit beta-1 (191 aa).

Residues 1–18 are Cytoplasmic-facing; it reads MGKKLVMAQKRGETRALC. The chain crosses the membrane as a helical span at residues 19–39; it reads LGVAMVVCAAITYYILGTTVL. At 40–155 the chain is on the extracellular side; the sequence is PLYQKSVWTQ…VVYQRLYGPQ (116 aa). Asn80 and Asn142 each carry an N-linked (GlcNAc...) asparagine glycan. The helical transmembrane segment at 156 to 176 threads the bilayer; sequence ILLFSFFWPTFLLTGGLLIIA. Residues 177 to 191 are Cytoplasmic-facing; sequence MVKLNRSLSVLAAQK.

Belongs to the KCNMB (TC 8.A.14.1) family. KCNMB1 subfamily. In terms of assembly, interacts with KCNMA1 tetramer. There are probably 4 molecules of KCMNB1 per KCNMA1 tetramer. Post-translationally, N-glycosylated. Weakly expressed. In brain, it is expressed in a few discrete populations of neurons that also express KCNMA1.

The protein localises to the membrane. Functionally, regulatory subunit of the calcium activated potassium KCNMA1 (maxiK) channel. Modulates the calcium sensitivity and gating kinetics of KCNMA1, thereby contributing to KCNMA1 channel diversity. Increases the apparent Ca(2+)/voltage sensitivity of the KCNMA1 channel. It also modifies KCNMA1 channel kinetics and alters its pharmacological properties. It slows down the activation and the deactivation kinetics of the channel. Acts as a negative regulator of smooth muscle contraction by enhancing the calcium sensitivity to KCNMA1. Its presence is also a requirement for internal binding of the KCNMA1 channel opener dehydrosoyasaponin I (DHS-1) triterpene glycoside and for external binding of the agonist hormone 17-beta-estradiol (E2). Increases the binding activity of charybdotoxin (CTX) toxin to KCNMA1 peptide blocker by increasing the CTX association rate and decreasing the dissociation rate. The sequence is that of Calcium-activated potassium channel subunit beta-1 (Kcnmb1) from Rattus norvegicus (Rat).